Consider the following 479-residue polypeptide: Glycogen synthase (479 aa).

Lys-16 lines the ADP-alpha-D-glucose pocket.

It belongs to the glycosyltransferase 1 family. Bacterial/plant glycogen synthase subfamily.

The enzyme catalyses [(1-&gt;4)-alpha-D-glucosyl](n) + ADP-alpha-D-glucose = [(1-&gt;4)-alpha-D-glucosyl](n+1) + ADP + H(+). Its pathway is glycan biosynthesis; glycogen biosynthesis. In terms of biological role, synthesizes alpha-1,4-glucan chains using ADP-glucose. This Lactiplantibacillus plantarum (strain ATCC BAA-793 / NCIMB 8826 / WCFS1) (Lactobacillus plantarum) protein is Glycogen synthase.